The primary structure comprises 307 residues: Ribosomal protein L11 methyltransferase (307 aa).

Residues threonine 156, glycine 177, aspartate 199, and asparagine 243 each coordinate S-adenosyl-L-methionine.

Belongs to the methyltransferase superfamily. PrmA family.

The protein resides in the cytoplasm. It carries out the reaction L-lysyl-[protein] + 3 S-adenosyl-L-methionine = N(6),N(6),N(6)-trimethyl-L-lysyl-[protein] + 3 S-adenosyl-L-homocysteine + 3 H(+). Its function is as follows. Methylates ribosomal protein L11. The chain is Ribosomal protein L11 methyltransferase from Syntrophomonas wolfei subsp. wolfei (strain DSM 2245B / Goettingen).